Here is a 403-residue protein sequence, read N- to C-terminus: Octaketide synthase 1 (403 aa).

Cys-174 is an active-site residue. Residues Ser-281 and 318-321 (GGRA) each bind CoA.

This sequence belongs to the thiolase-like superfamily. Chalcone/stilbene synthases family. In terms of assembly, homodimer.

It functions in the pathway secondary metabolite biosynthesis; flavonoid biosynthesis. Catalyzes the iterative condensations of 8 molecules of malonyl-CoA to produce aromatic octaketides, SEK4 and SEK4b, the products of the minimal polyketide synthase for the benzoisochromanequinone actinorhodin. May be involved in the biosynthesis of the octaketide barbaloin. This is Octaketide synthase 1 from Aloe arborescens (Kidachi aloe).